Consider the following 366-residue polypeptide: Dihydroorotate dehydrogenase (quinone) (366 aa).

Residues 74-78 (AGFDK) and threonine 98 contribute to the FMN site. Residue lysine 78 participates in substrate binding. 123-127 (NRMGF) is a binding site for substrate. FMN contacts are provided by asparagine 156 and asparagine 189. Asparagine 189 provides a ligand contact to substrate. The Nucleophile role is filled by serine 192. Substrate is bound at residue asparagine 194. Residues lysine 231 and threonine 259 each coordinate FMN. A substrate-binding site is contributed by 260 to 261 (NT). Residues glycine 285, glycine 314, and 335–336 (YT) each bind FMN.

This sequence belongs to the dihydroorotate dehydrogenase family. Type 2 subfamily. As to quaternary structure, monomer. It depends on FMN as a cofactor.

The protein localises to the cell membrane. It catalyses the reaction (S)-dihydroorotate + a quinone = orotate + a quinol. The protein operates within pyrimidine metabolism; UMP biosynthesis via de novo pathway; orotate from (S)-dihydroorotate (quinone route): step 1/1. Its function is as follows. Catalyzes the conversion of dihydroorotate to orotate with quinone as electron acceptor. The chain is Dihydroorotate dehydrogenase (quinone) from Kineococcus radiotolerans (strain ATCC BAA-149 / DSM 14245 / SRS30216).